Here is a 319-residue protein sequence, read N- to C-terminus: tRNA (guanine-N(7)-)-methyltransferase (319 aa).

Glutamate 28, glutamate 51, and aspartate 75 together coordinate S-adenosyl-L-methionine. Residues aspartate 134 and 167–170 (TKYE) each bind substrate.

This sequence belongs to the class I-like SAM-binding methyltransferase superfamily. TrmB family.

The catalysed reaction is guanosine(46) in tRNA + S-adenosyl-L-methionine = N(7)-methylguanosine(46) in tRNA + S-adenosyl-L-homocysteine. It functions in the pathway tRNA modification; N(7)-methylguanine-tRNA biosynthesis. Its function is as follows. Catalyzes the formation of N(7)-methylguanine at position 46 (m7G46) in tRNA. The chain is tRNA (guanine-N(7)-)-methyltransferase from Coprothermobacter proteolyticus (strain ATCC 35245 / DSM 5265 / OCM 4 / BT).